The chain runs to 129 residues: Large ribosomal subunit protein bL12 (129 aa).

This sequence belongs to the bacterial ribosomal protein bL12 family. As to quaternary structure, homodimer. Part of the ribosomal stalk of the 50S ribosomal subunit. Forms a multimeric L10(L12)X complex, where L10 forms an elongated spine to which 2 to 4 L12 dimers bind in a sequential fashion. Binds GTP-bound translation factors.

Its function is as follows. Forms part of the ribosomal stalk which helps the ribosome interact with GTP-bound translation factors. Is thus essential for accurate translation. The sequence is that of Large ribosomal subunit protein bL12 from Solidesulfovibrio magneticus (strain ATCC 700980 / DSM 13731 / RS-1) (Desulfovibrio magneticus).